A 162-amino-acid chain; its full sequence is Transcription antitermination protein NusB (162 aa).

The protein belongs to the NusB family.

In terms of biological role, involved in transcription antitermination. Required for transcription of ribosomal RNA (rRNA) genes. Binds specifically to the boxA antiterminator sequence of the ribosomal RNA (rrn) operons. In Mycobacterium sp. (strain JLS), this protein is Transcription antitermination protein NusB.